Consider the following 276-residue polypeptide: Glucosamine-6-phosphate deaminase 2 (276 aa).

The active-site Proton acceptor; for enolization step is aspartate 72. Residues 105-130 adopt a coiled-coil conformation; the sequence is HILDGNAADLQAECDAFENKIKEAGG. Residue aspartate 141 is the For ring-opening step of the active site. Histidine 143 serves as the catalytic Proton acceptor; for ring-opening step. Glutamate 148 (for ring-opening step) is an active-site residue. A Phosphothreonine modification is found at threonine 161.

This sequence belongs to the glucosamine/galactosamine-6-phosphate isomerase family. In terms of assembly, homohexamer. In terms of tissue distribution, ubiquitous, with highest expression detected in testis, ovary, placenta, and heart.

The protein resides in the cytoplasm. The catalysed reaction is alpha-D-glucosamine 6-phosphate + H2O = beta-D-fructose 6-phosphate + NH4(+). Its pathway is nucleotide-sugar biosynthesis; UDP-N-acetyl-alpha-D-glucosamine biosynthesis; alpha-D-glucosamine 6-phosphate from D-fructose 6-phosphate: step 1/1. With respect to regulation, allosterically activated by N-acetylglucosamine-6-phosphate (GlcNAc6P). Catalyzes the reversible conversion of alpha-D-glucosamine 6-phosphate (GlcN-6P) into beta-D-fructose 6-phosphate (Fru-6P) and ammonium ion, a regulatory reaction step in de novo uridine diphosphate-N-acetyl-alpha-D-glucosamine (UDP-GlcNAc) biosynthesis via hexosamine pathway. Deamination is coupled to aldo-keto isomerization mediating the metabolic flux from UDP-GlcNAc toward Fru-6P. At high ammonium level can drive amination and isomerization of Fru-6P toward hexosamines and UDP-GlcNAc synthesis. Has a role in fine tuning the metabolic fluctuations of cytosolic UDP-GlcNAc and their effects on hyaluronan synthesis that occur during tissue remodeling. In Homo sapiens (Human), this protein is Glucosamine-6-phosphate deaminase 2.